A 392-amino-acid chain; its full sequence is Caveolae-associated protein 1 (392 aa).

Position 1 is an N-acetylmethionine (Met-1). The segment covering 1-10 (MEDVTLHIVE) has biased composition (basic and acidic residues). Residues 1-45 (MEDVTLHIVERPYSGYPDASSEGPEPTPGEARATEEPSGTGSDEL) are disordered. Residues 1 to 100 (MEDVTLHIVE…IQGELSKLGK (100 aa)) are required for homotrimerization and for interaction with CAVIN2 and CAVIN3. Ser-21 and Ser-38 each carry phosphoserine. Thr-40 carries the phosphothreonine modification. Phosphoserine occurs at positions 42 and 48. The tract at residues 54–64 (VLVLSLLDKII) is nuclear export signal. Residues 55 to 77 (LVLSLLDKIIGAVDQIQLTQAQL) are leucine-zipper 1. Residue Lys-118 forms a Glycyl lysine isopeptide (Lys-Gly) (interchain with G-Cter in SUMO2) linkage. Position 120 is a phosphoserine (Ser-120). Residue Lys-124 forms a Glycyl lysine isopeptide (Lys-Gly) (interchain with G-Cter in SUMO2) linkage. The segment at 138–154 (KKLEVNEAELLRRRNFK) is nuclear localization signal. Residue Tyr-158 is modified to Phosphotyrosine. Lys-163 participates in a covalent cross-link: Glycyl lysine isopeptide (Lys-Gly) (interchain with G-Cter in SUMO1); alternate. Residue Lys-163 forms a Glycyl lysine isopeptide (Lys-Gly) (interchain with G-Cter in SUMO2); alternate linkage. Residue Lys-167 forms a Glycyl lysine isopeptide (Lys-Gly) (interchain with G-Cter in SUMO2) linkage. Residues 168–188 (LSVSKSLKESEALPEKEGDEL) are leucine-zipper 2. A phosphoserine mark is found at Ser-169 and Ser-171. Residue Lys-172 forms a Glycyl lysine isopeptide (Lys-Gly) (interchain with G-Cter in SUMO2) linkage. Phosphoserine occurs at positions 173 and 177. Positions 173–183 (SLKESEALPEK) are enriched in basic and acidic residues. Residues 173–198 (SLKESEALPEKEGDELGEGERPEEDA) are disordered. Residues 184 to 198 (EGDELGEGERPEEDA) show a composition bias toward acidic residues. Residues 201–284 (IELSSDEAVE…RMNKLGTRLV (84 aa)) adopt a coiled-coil conformation. Phosphoserine is present on residues Ser-204 and Ser-205. The segment at 235–251 (KKAFSKEKMEKTKVRTR) is nuclear localization signal. The tract at residues 259–299 (LKTKENLEKTRHTLEKRMNKLGTRLVPVERREKLKTSRDKL) is leucine-zipper 3. Position 302 is a phosphoserine (Ser-302). Phosphothreonine is present on Thr-304. Residue Tyr-310 is modified to Phosphotyrosine. A Glycyl lysine isopeptide (Lys-Gly) (interchain with G-Cter in SUMO2) cross-link involves residue Lys-328. The disordered stretch occupies residues 347 to 367 (GPDDDEVGAERGAETDLLRGS). Positions 354-363 (GAERGAETDL) are enriched in basic and acidic residues. Ser-367, Ser-368, Ser-381, Ser-389, and Ser-391 each carry phosphoserine.

It belongs to the CAVIN family. As to quaternary structure, component of the CAVIN complex composed of CAVIN1, CAVIN2, CAVIN3 and CAVIN4. Interacts with RNA polymerase I subunit POLR1A/RPA1 and TTF1. Binds the 3' end of pre-rRNA. Interacts with transcription factor ZNF148. Interacts with LIPE in the adipocyte cytoplasm. Interacts with CAV1, CAV3, CAVIN2, CAVIN3 and CAVIN4. In terms of processing, phosphorylated. Present in active and inactive forms. Changes in phosphorylation pattern may alter activity. Phosphorylation at Tyr-158 is essential for its function in the regulation of ribosomal transcriptional activity. Monoubiquitinated. In terms of tissue distribution, expressed in the adipocyte (at protein level). Expressed in all striated and smooth muscles tested including diaphragm, esophageal striated muscle, fibroblast, endocardial endothelium, epicardial mesothelium, intestinal smooth muscle, masseter, soleus muscle, vascular smooth muscle and white gastrocnemius muscle (at protein level). Expressed in the endothelium and perineural sheath (at protein level). Not expressed in hepatocytes.

It localises to the membrane. Its subcellular location is the caveola. The protein localises to the cell membrane. The protein resides in the microsome. It is found in the endoplasmic reticulum. It localises to the cytoplasm. Its subcellular location is the cytosol. The protein localises to the mitochondrion. The protein resides in the nucleus. In terms of biological role, plays an important role in caveolae formation and organization. Essential for the formation of caveolae in all tissues. Core component of the CAVIN complex which is essential for recruitment of the complex to the caveolae in presence of calveolin-1 (CAV1). Essential for normal oligomerization of CAV1. Promotes ribosomal transcriptional activity in response to metabolic challenges in the adipocytes and plays an important role in the formation of the ribosomal transcriptional loop. Dissociates transcription complexes paused by DNA-bound TTF1, thereby releasing both RNA polymerase I and pre-RNA from the template. The caveolae biogenesis pathway is required for the secretion of proteins such as GASK1A. The polypeptide is Caveolae-associated protein 1 (Rattus norvegicus (Rat)).